The primary structure comprises 357 residues: Protein RecA (357 aa).

Residue 67–74 participates in ATP binding; that stretch reads GPESSGKT. Residues 335-357 form a disordered region; the sequence is LSSSASDDENSEGNVDFETGEVF.

The protein belongs to the RecA family.

Its subcellular location is the cytoplasm. Its function is as follows. Can catalyze the hydrolysis of ATP in the presence of single-stranded DNA, the ATP-dependent uptake of single-stranded DNA by duplex DNA, and the ATP-dependent hybridization of homologous single-stranded DNAs. It interacts with LexA causing its activation and leading to its autocatalytic cleavage. The sequence is that of Protein RecA from Shewanella sp. (strain MR-4).